The sequence spans 482 residues: tRNA sulfurtransferase (482 aa).

One can recognise a THUMP domain in the interval 61-165; it reads LAIRDALTRI…DDRLLLIKGR (105 aa). ATP is bound by residues 183-184, K265, G287, and Q296; that span reads LI. The cysteines at positions 344 and 456 are disulfide-linked. A Rhodanese domain is found at 404–482; the sequence is FGPNDVILDI…GFNNVKVYRP (79 aa). The active-site Cysteine persulfide intermediate is the C456.

Belongs to the ThiI family.

It localises to the cytoplasm. The enzyme catalyses [ThiI sulfur-carrier protein]-S-sulfanyl-L-cysteine + a uridine in tRNA + 2 reduced [2Fe-2S]-[ferredoxin] + ATP + H(+) = [ThiI sulfur-carrier protein]-L-cysteine + a 4-thiouridine in tRNA + 2 oxidized [2Fe-2S]-[ferredoxin] + AMP + diphosphate. The catalysed reaction is [ThiS sulfur-carrier protein]-C-terminal Gly-Gly-AMP + S-sulfanyl-L-cysteinyl-[cysteine desulfurase] + AH2 = [ThiS sulfur-carrier protein]-C-terminal-Gly-aminoethanethioate + L-cysteinyl-[cysteine desulfurase] + A + AMP + 2 H(+). Its pathway is cofactor biosynthesis; thiamine diphosphate biosynthesis. Catalyzes the ATP-dependent transfer of a sulfur to tRNA to produce 4-thiouridine in position 8 of tRNAs, which functions as a near-UV photosensor. Also catalyzes the transfer of sulfur to the sulfur carrier protein ThiS, forming ThiS-thiocarboxylate. This is a step in the synthesis of thiazole, in the thiamine biosynthesis pathway. The sulfur is donated as persulfide by IscS. This is tRNA sulfurtransferase from Escherichia coli (strain K12 / MC4100 / BW2952).